The sequence spans 656 residues: uncharacterized protein (656 aa).

The tract at residues Glu623–Arg656 is disordered. Residues Thr645–Arg656 show a composition bias toward basic and acidic residues.

This is an uncharacterized protein from Mycobacterium tuberculosis (strain CDC 1551 / Oshkosh).